A 364-amino-acid polypeptide reads, in one-letter code: UDP-N-acetylglucosamine--N-acetylmuramyl-(pentapeptide) pyrophosphoryl-undecaprenol N-acetylglucosamine transferase (364 aa).

Residues 10-12, N124, R165, S193, I248, and Q293 each bind UDP-N-acetyl-alpha-D-glucosamine; that span reads TGG.

This sequence belongs to the glycosyltransferase 28 family. MurG subfamily.

Its subcellular location is the cell inner membrane. It carries out the reaction di-trans,octa-cis-undecaprenyl diphospho-N-acetyl-alpha-D-muramoyl-L-alanyl-D-glutamyl-meso-2,6-diaminopimeloyl-D-alanyl-D-alanine + UDP-N-acetyl-alpha-D-glucosamine = di-trans,octa-cis-undecaprenyl diphospho-[N-acetyl-alpha-D-glucosaminyl-(1-&gt;4)]-N-acetyl-alpha-D-muramoyl-L-alanyl-D-glutamyl-meso-2,6-diaminopimeloyl-D-alanyl-D-alanine + UDP + H(+). It functions in the pathway cell wall biogenesis; peptidoglycan biosynthesis. In terms of biological role, cell wall formation. Catalyzes the transfer of a GlcNAc subunit on undecaprenyl-pyrophosphoryl-MurNAc-pentapeptide (lipid intermediate I) to form undecaprenyl-pyrophosphoryl-MurNAc-(pentapeptide)GlcNAc (lipid intermediate II). The chain is UDP-N-acetylglucosamine--N-acetylmuramyl-(pentapeptide) pyrophosphoryl-undecaprenol N-acetylglucosamine transferase from Geobacter sulfurreducens (strain ATCC 51573 / DSM 12127 / PCA).